Here is a 941-residue protein sequence, read N- to C-terminus: Isoleucine--tRNA ligase (941 aa).

The 'HIGH' region signature appears at 59–69 (PYANGNIHIGH). Glutamate 562 lines the L-isoleucyl-5'-AMP pocket. The short motif at 603–607 (KMSKS) is the 'KMSKS' region element. Residue lysine 606 coordinates ATP. Positions 904, 907, 924, and 927 each coordinate Zn(2+).

It belongs to the class-I aminoacyl-tRNA synthetase family. IleS type 1 subfamily. In terms of assembly, monomer. It depends on Zn(2+) as a cofactor.

Its subcellular location is the cytoplasm. The enzyme catalyses tRNA(Ile) + L-isoleucine + ATP = L-isoleucyl-tRNA(Ile) + AMP + diphosphate. Functionally, catalyzes the attachment of isoleucine to tRNA(Ile). As IleRS can inadvertently accommodate and process structurally similar amino acids such as valine, to avoid such errors it has two additional distinct tRNA(Ile)-dependent editing activities. One activity is designated as 'pretransfer' editing and involves the hydrolysis of activated Val-AMP. The other activity is designated 'posttransfer' editing and involves deacylation of mischarged Val-tRNA(Ile). The protein is Isoleucine--tRNA ligase of Haemophilus influenzae (strain ATCC 51907 / DSM 11121 / KW20 / Rd).